Here is a 144-residue protein sequence, read N- to C-terminus: Glycine-rich protein DC9.1 (144 aa).

A helical membrane pass occupies residues 5–25; it reads IFLLLGLSIAFAILISSEVAA. Tandem repeats lie at residues 37 to 42, 43 to 48, 50 to 55, 56 to 61, 63 to 68, 69 to 74, 76 to 81, 82 to 87, 89 to 94, 102 to 107, and 108 to 113. The segment at 37–113 is 11 X 6 AA tandem repeats of G-Y-[NH]-N-G -G; that stretch reads GYNNGGGYHN…NNGGGHHGGG (77 aa).

This sequence belongs to the GRP family.

It localises to the membrane. In Daucus carota (Wild carrot), this protein is Glycine-rich protein DC9.1.